The chain runs to 408 residues: Phosphoglycerate kinase (408 aa).

Substrate-binding positions include D22–N24, R39, H60–R63, R117, and R157. Residues E332 and G358–T361 contribute to the ATP site.

Belongs to the phosphoglycerate kinase family. In terms of assembly, monomer.

The protein localises to the cytoplasm. It catalyses the reaction (2R)-3-phosphoglycerate + ATP = (2R)-3-phospho-glyceroyl phosphate + ADP. Its pathway is carbohydrate degradation; glycolysis; pyruvate from D-glyceraldehyde 3-phosphate: step 2/5. This Thermoplasma volcanium (strain ATCC 51530 / DSM 4299 / JCM 9571 / NBRC 15438 / GSS1) protein is Phosphoglycerate kinase.